Here is a 446-residue protein sequence, read N- to C-terminus: Zinc finger protein BALDIBIS (446 aa).

Residues 20–53 (EHIAPNPNPNPNPTSSNSAKRKRNLPGNPDPDAE) form a disordered region. Position 58 is a phosphoserine (serine 58). C2H2-type zinc fingers lie at residues 68–90 (FICE…RRGH) and 110–140 (YICP…SRKH). The Nuclear localization signal signature appears at 132-139 (IKKHFSRK). The C2H2-type 2; degenerate zinc finger occupies 145 to 168 (WKCDKCSKKYAVMSDWKAHSKICG). Residues cysteine 147, cysteine 150, histidine 163, cysteine 167, cysteine 174, cysteine 176, histidine 189, and cysteine 193 each contribute to the Zn(2+) site. Residues 172–195 (YRCDCGTLFSRKDSFITHRAFCDA) form a CCHC-type 2; atypical zinc finger. An SHR-binding region spans residues 182–194 (RKDSFITHRAFCD). The segment at 425–446 (HNLPDSSPPASTDGTPTADMNQ) is disordered. The segment covering 427-446 (LPDSSPPASTDGTPTADMNQ) has biased composition (polar residues).

In terms of assembly, binds to RGA and SCL3 competitively in the nucleus. As to expression, expressed in roots, especially in vascular initials, cortex, endodermis, and quiescent center (QC).

The protein localises to the nucleus. Its function is as follows. Transcription factor that, together with JKD, regulates tissue boundaries and asymmetric cell division in roots by a rapid up-regulation of 'SCARECROW' (SCR), thus controlling the nuclear localization of 'SHORT-ROOT' (SHR) and restricting its action. Confines CYCD6 expression to the cortex-endodermis initial/daughter (CEI/CEID) tissues. Binds DNA via its zinc fingers. Recognizes and binds to SCL3 promoter sequence 5'-AGACAA-3' to promote its expression when in complex with RGA. This chain is Zinc finger protein BALDIBIS, found in Arabidopsis thaliana (Mouse-ear cress).